The following is a 123-amino-acid chain: DPEP2 neighbor protein (123 aa).

The interval 67 to 123 (APLATPTKAEAEKPAPRRAPKRRQATIESDKDLGCSSPKIRRLEHRGRRLTPQKLAG) is disordered. Over residues 105–117 (KIRRLEHRGRRLT) the composition is skewed to basic residues.

The chain is DPEP2 neighbor protein from Homo sapiens (Human).